The following is a 284-amino-acid chain: Bifunctional protein FolD (284 aa).

NADP(+) is bound by residues Gly-165 to Ser-167 and Ser-190.

Belongs to the tetrahydrofolate dehydrogenase/cyclohydrolase family. Homodimer.

It carries out the reaction (6R)-5,10-methylene-5,6,7,8-tetrahydrofolate + NADP(+) = (6R)-5,10-methenyltetrahydrofolate + NADPH. It catalyses the reaction (6R)-5,10-methenyltetrahydrofolate + H2O = (6R)-10-formyltetrahydrofolate + H(+). Its pathway is one-carbon metabolism; tetrahydrofolate interconversion. Functionally, catalyzes the oxidation of 5,10-methylenetetrahydrofolate to 5,10-methenyltetrahydrofolate and then the hydrolysis of 5,10-methenyltetrahydrofolate to 10-formyltetrahydrofolate. The sequence is that of Bifunctional protein FolD from Streptococcus agalactiae serotype Ia (strain ATCC 27591 / A909 / CDC SS700).